A 480-amino-acid chain; its full sequence is Chromosomal replication initiator protein DnaA (480 aa).

A domain I, interacts with DnaA modulators region spans residues 1–71 (MNLTKVWNTT…REQLGSVVGF (71 aa)). The segment at 71-139 (FPVDVRIVLA…LELHRAVRSS (69 aa)) is domain II. Residues 91 to 115 (SINGRHAARDTRKSDHHAPLSGGYG) form a disordered region. The segment covering 97–108 (AARDTRKSDHHA) has biased composition (basic and acidic residues). The tract at residues 140-356 (MLNPRYTFDR…GCLNRVTAYA (217 aa)) is domain III, AAA+ region. Residues glycine 184, glycine 186, lysine 187, and threonine 188 each contribute to the ATP site. Positions 357-480 (QMYNIPVTIE…IRERLMNSAV (124 aa)) are domain IV, binds dsDNA.

This sequence belongs to the DnaA family. In terms of assembly, oligomerizes as a right-handed, spiral filament on DNA at oriC.

It localises to the cytoplasm. Its function is as follows. Plays an essential role in the initiation and regulation of chromosomal replication. ATP-DnaA binds to the origin of replication (oriC) to initiate formation of the DNA replication initiation complex once per cell cycle. Binds the DnaA box (a 9 base pair repeat at the origin) and separates the double-stranded (ds)DNA. Forms a right-handed helical filament on oriC DNA; dsDNA binds to the exterior of the filament while single-stranded (ss)DNA is stabiized in the filament's interior. The ATP-DnaA-oriC complex binds and stabilizes one strand of the AT-rich DNA unwinding element (DUE), permitting loading of DNA polymerase. After initiation quickly degrades to an ADP-DnaA complex that is not apt for DNA replication. Binds acidic phospholipids. This Roseiflexus castenholzii (strain DSM 13941 / HLO8) protein is Chromosomal replication initiator protein DnaA.